The following is a 229-amino-acid chain: Internal virion protein gp7 (229 aa).

The propeptide at 1–20 is removed in mature form; that stretch reads MLYAFTLGRKLRGEEPSYPE.

This sequence belongs to the podoviruses gp7 family. In terms of assembly, interacts with the internal virion protein gp20; this interaction forms a tube-like structure that may allow DNA ejection through the host membranes.

It localises to the virion. Functionally, inner capsid protein that plays a role in viral DNA ejection into the host cell. Assembles into an extracellular trans-envelope channel completed by the internal virion proteins gp7 and probably gp16. This channel allows the delivery of the viral genome into the cell cytoplasm. Displays membrane-association properties, may therefore form a simple channel spanning the outer membrane. The protein is Internal virion protein gp7 (7) of Salmonella phage P22 (Bacteriophage P22).